A 519-amino-acid polypeptide reads, in one-letter code: MVRFAWRRRASLRATSSLSLRWRVMLLAMSMVAMVVVLMAFAVYVVISAALYSDIDNQLQSRAQLLIASGSLAADPGKAIEGTAYSDVNAMLVNPGHSIYTANQPGQTLPVGTAEKAVIRGELFMSQRTASDQRILAIHLPNDSSLLISKSLRPTEAVMTKLRWVLLIVGSLGVAVAAVAGGMVTRAGLRPVGRLTEAAERVARTDDLRPIPVFGSDELARLTEAFNLMLRALAESRERQARLVTDAGHELRTPLTSLRTNVELLIASMAPEAPRLPDQEMADLRADVLAQIEELSTLVGDLVDLTRDDAGQVVHEPIDMSEVLYRSLERVRRRRNDIHFDVQAIGWQIYGDAAGLSRAVLNLMDNAAKWSPSGGRVVVTMRQFDPSHVELVVSDYGPGIPPQERRLVFERFYRSTTARSLPGSGLGLAIVKQVVINHGGLLRVEDTAPGVQPPGTSIYVLLPGRPMPVSAYSTLADQDMGEANFQDKIGPAVQVSGKSANFRDSAHVISVDYQSARAR.

Residues 1–26 (MVRFAWRRRASLRATSSLSLRWRVML) are Cytoplasmic-facing. A helical membrane pass occupies residues 27–47 (LAMSMVAMVVVLMAFAVYVVI). Residues 48–163 (SAALYSDIDN…PTEAVMTKLR (116 aa)) lie on the Extracellular side of the membrane. Residues 164-184 (WVLLIVGSLGVAVAAVAGGMV) traverse the membrane as a helical segment. Residues 185-519 (TRAGLRPVGR…SVDYQSARAR (335 aa)) are Cytoplasmic-facing. One can recognise an HAMP domain in the interval 186-238 (RAGLRPVGRLTEAAERVARTDDLRPIPVFGSDELARLTEAFNLMLRALAESRE). The Histidine kinase domain maps to 246–466 (DAGHELRTPL…SIYVLLPGRP (221 aa)). A Phosphohistidine; by autocatalysis modification is found at histidine 249.

Mg(2+) serves as cofactor. Requires Mn(2+) as cofactor. Post-translationally, autophosphorylated.

It is found in the cell membrane. The enzyme catalyses ATP + protein L-histidine = ADP + protein N-phospho-L-histidine.. Its function is as follows. Member of the two-component regulatory system MprB/MprA which contributes to maintaining a balance among several systems involved in stress resistance and is required for establishment and maintenance of persistent infection in the host. In response to environmental signals MprB acts both as a membrane-associated protein kinase that undergoes autophosphorylation and subsequently transfers the phosphate to MprA, and a protein phosphatase that dephosphorylates phospho-MprA. The sequence is that of Signal transduction histidine-protein kinase/phosphatase MprB (mprB) from Mycobacterium leprae (strain TN).